The following is a 165-amino-acid chain: Protein SprT (165 aa).

The 144-residue stretch at glutamate 20–valine 163 folds into the SprT-like domain. Position 78 (histidine 78) interacts with Zn(2+). The active site involves glutamate 79. Histidine 82 lines the Zn(2+) pocket.

This sequence belongs to the SprT family. Zn(2+) serves as cofactor.

It is found in the cytoplasm. This is Protein SprT from Shigella boydii serotype 18 (strain CDC 3083-94 / BS512).